We begin with the raw amino-acid sequence, 431 residues long: Evolutionarily conserved signaling intermediate in Toll pathway, mitochondrial (431 aa).

The transit peptide at Met1–His48 directs the protein to the mitochondrion. Lys372 participates in a covalent cross-link: Glycyl lysine isopeptide (Lys-Gly) (interchain with G-Cter in ubiquitin). The disordered stretch occupies residues Leu400–Ser431.

Belongs to the ECSIT family. As to quaternary structure, interacts with MAP3K1, SMAD4 and TRAF6. Interacts with SMAD1 only after BMP4-treatment. Part of the mitochondrial complex I assembly/MCIA complex that comprises at least the core subunits TMEM126B, NDUFAF1, ECSIT and ACAD9 and complement subunits such as COA1 and TMEM186. Interacts with NDUFAF1. Interacts with ACAD9. Interacts with TRIM59. Interacts with TMEM70 and TMEM242. Interacts (when ubiquitinated) with NF-kappa-B subunits RELA and NFKB1. Interacts with RIGI, IFIT1 and MAVS; these interactions promote RLR-mediated type I IFN induction. Interacts with SQSTM1; this interaction inhibits TLR4 signaling via functional regulation of the TRAF6-ECSIT complex. Interacts with cereblon/CRBN; this interaction inhibits the ubiquitination of ECSIT. Ubiquitinated on Lys-372; leading to translocation in the nucleus together with RELA and NFKB1 and expression of NF-kappa-B-dependent genes.

The protein localises to the cytoplasm. The protein resides in the nucleus. It localises to the mitochondrion. In terms of biological role, adapter protein that plays a role in different signaling pathways including TLRs and IL-1 pathways or innate antiviral induction signaling. Plays a role in the activation of NF-kappa-B by forming a signal complex with TRAF6 and TAK1/MAP3K7 to activate TAK1/MAP3K7 leading to activation of IKKs. Once ubiquitinated, interacts with the dissociated RELA and NFKB1 proteins and translocates to the nucleus where it induces NF-kappa-B-dependent gene expression. Plays a role in innate antiviral immune response by bridging the pattern recognition receptors RIGI and MDA5/IFIT1 to the MAVS complex at the mitochondrion. Promotes proteolytic activation of MAP3K1. Involved in the BMP signaling pathway. Required for normal embryonic development. As part of the MCIA complex, involved in the assembly of the mitochondrial complex I. The sequence is that of Evolutionarily conserved signaling intermediate in Toll pathway, mitochondrial from Homo sapiens (Human).